The sequence spans 256 residues: Alcohol dehydrogenase (256 aa).

12-35 (FVAGLGGIGLDTSKELVKRDLKNL) contacts NAD(+). Substrate is bound at residue Ser-140. Residue Tyr-153 is the Proton acceptor of the active site.

It belongs to the short-chain dehydrogenases/reductases (SDR) family. As to quaternary structure, homodimer.

It catalyses the reaction a primary alcohol + NAD(+) = an aldehyde + NADH + H(+). It carries out the reaction a secondary alcohol + NAD(+) = a ketone + NADH + H(+). The chain is Alcohol dehydrogenase (Adh) from Drosophila teissieri (Fruit fly).